Here is a 285-residue protein sequence, read N- to C-terminus: RNA polymerase sigma factor RpoH (285 aa).

A sigma-70 factor domain-2 region spans residues 53–122 (LILSHLRFVV…IHEYVLRNWR (70 aa)). Residues 77–80 (DLVQ) carry the Interaction with polymerase core subunit RpoC motif. Residues 229-280 (ALASLDERSQHIVRSRWLDDDKATLQDLAEMYGVSAERIRQLEKNAMKKLKM) form a sigma-70 factor domain-4 region. The segment at residues 253–272 (LQDLAEMYGVSAERIRQLEK) is a DNA-binding region (H-T-H motif).

The protein belongs to the sigma-70 factor family. RpoH subfamily. Interacts with the RNA polymerase core enzyme.

It is found in the cytoplasm. In terms of biological role, sigma factors are initiation factors that promote the attachment of RNA polymerase to specific initiation sites and are then released. This sigma factor is involved in regulation of expression of heat shock genes. This Vibrio vulnificus (strain CMCP6) protein is RNA polymerase sigma factor RpoH.